Here is a 367-residue protein sequence, read N- to C-terminus: Testis-specific serine/threonine-protein kinase 1 (367 aa).

Residues 12–272 (YLLGINLGEG…IDEILSHCWM (261 aa)) form the Protein kinase domain. ATP-binding positions include 18-26 (LGEGSYAKV) and K41. D136 functions as the Proton acceptor in the catalytic mechanism. The residue at position 174 (T174) is a Phosphothreonine. A disordered region spans residues 276–367 (ARGSPSVAIN…PQQPPETRAQ (92 aa)). Basic and acidic residues predominate over residues 303–314 (GSDKKSATKLEP).

Belongs to the protein kinase superfamily. CAMK Ser/Thr protein kinase family. As to quaternary structure, interacts with TSSK2. Interacts with HSP90; this interaction stabilizes TSSK1. It depends on Mg(2+) as a cofactor. Autophosphorylated. Post-translationally, ubiquitinated; HSP90 activity negatively regulates ubiquitination and degradation. In terms of tissue distribution, testis-specific. Present in sperm (at protein level).

The protein resides in the cytoplasm. It is found in the cytoplasmic vesicle. Its subcellular location is the secretory vesicle. It localises to the acrosome. The protein localises to the cell projection. The protein resides in the cilium. It is found in the flagellum. It carries out the reaction L-seryl-[protein] + ATP = O-phospho-L-seryl-[protein] + ADP + H(+). It catalyses the reaction L-threonyl-[protein] + ATP = O-phospho-L-threonyl-[protein] + ADP + H(+). Its activity is regulated as follows. Kinase activity is specifically inhibited by 2 classes of compounds: biphenyl compounds (1,1'-(biphenyl-4,4'-diyl)bis(2,2-dihydroxyethanone)) and 1,2,7-trialky-1H-imidazo[4,5-g]quinoxalin-6-one. Activated by phosphorylation on Thr-174 and potentially by autophosphorylation. Its function is as follows. Testis-specific serine/threonine-protein kinase required during spermatid development. Phosphorylates 'Ser-288' of TSKS. Involved in the late stages of spermatogenesis, during the reconstruction of the cytoplasm. During spermatogenesis, required for the transformation of a ring-shaped structure around the base of the flagellum originating from the chromatoid body. The polypeptide is Testis-specific serine/threonine-protein kinase 1 (TSSK1B) (Homo sapiens (Human)).